Here is an 89-residue protein sequence, read N- to C-terminus: Putative regulatory protein PCC8801_0196 (89 aa).

It belongs to the RemA family.

The protein is Putative regulatory protein PCC8801_0196 of Rippkaea orientalis (strain PCC 8801 / RF-1) (Cyanothece sp. (strain PCC 8801)).